We begin with the raw amino-acid sequence, 269 residues long: Tryptophan synthase alpha chain (269 aa).

Residues glutamate 49 and aspartate 60 each act as proton acceptor in the active site.

Belongs to the TrpA family. Tetramer of two alpha and two beta chains.

It catalyses the reaction (1S,2R)-1-C-(indol-3-yl)glycerol 3-phosphate + L-serine = D-glyceraldehyde 3-phosphate + L-tryptophan + H2O. Its pathway is amino-acid biosynthesis; L-tryptophan biosynthesis; L-tryptophan from chorismate: step 5/5. Its function is as follows. The alpha subunit is responsible for the aldol cleavage of indoleglycerol phosphate to indole and glyceraldehyde 3-phosphate. The chain is Tryptophan synthase alpha chain from Ectopseudomonas mendocina (strain ymp) (Pseudomonas mendocina).